A 394-amino-acid chain; its full sequence is Probable peptidoglycan glycosyltransferase FtsW (394 aa).

The Cytoplasmic segment spans residues 1–27 (MSALRSVAGLLQRWLLPARPAGLYDRQ). Residues 28-48 (LVVLALALMAVGLVIVASASI) form a helical membrane-spanning segment. The Periplasmic segment spans residues 49 to 64 (PEGIAINNDPFMFVKR). Residues 65 to 85 (HGLFLVMALGISWFVLQVPMA) form a helical membrane-spanning segment. Residues 86–88 (RWQ) are Cytoplasmic-facing. Residues 89-109 (HYNGPMLVLAILMLVLVLLVG) traverse the membrane as a helical segment. Over 110–123 (RSVNGSIRWLPLGP) the chain is Periplasmic. Residues 124–144 (FNLQPAEFGKLALFVYLAGYL) form a helical membrane-spanning segment. Residues 145–154 (VRRQSEVRER) are Cytoplasmic-facing. A helical membrane pass occupies residues 155-175 (FIGFMKPMAVLFVVAILLLAQ). A topological domain (periplasmic) is located at residue Pro176. A helical membrane pass occupies residues 177–197 (DLGSVVVMFVTSLGMLFLAGA). A topological domain (cytoplasmic) is located at residue Arg198. The chain crosses the membrane as a helical span at residues 199–219 (LGQFIGLILVGVSAVVTLVIA). At 220-279 (EPYRMRRVTSFLDPWADPFGSGYQLTQSLMAFGRGSWFGEGLGNSIQKMEYLPEAHTDFV) the chain is on the periplasmic side. A helical membrane pass occupies residues 280 to 300 (FAILGEELGYAGVLGALFLIF). The Cytoplasmic segment spans residues 301 to 322 (ALSFKALKLGHQALVAERLYEG). The chain crosses the membrane as a helical span at residues 323–343 (YLAIGIGIWFSFQTFVNVGAA). The Periplasmic portion of the chain corresponds to 344-354 (SGMMPTKGLTL). A helical transmembrane segment spans residues 355–375 (PLVSYGGSSLIIMMVAVSMLV). The Cytoplasmic portion of the chain corresponds to 376–394 (RIDFELRQASAQARVREVS).

This sequence belongs to the SEDS family. FtsW subfamily.

It localises to the cell inner membrane. It carries out the reaction [GlcNAc-(1-&gt;4)-Mur2Ac(oyl-L-Ala-gamma-D-Glu-L-Lys-D-Ala-D-Ala)](n)-di-trans,octa-cis-undecaprenyl diphosphate + beta-D-GlcNAc-(1-&gt;4)-Mur2Ac(oyl-L-Ala-gamma-D-Glu-L-Lys-D-Ala-D-Ala)-di-trans,octa-cis-undecaprenyl diphosphate = [GlcNAc-(1-&gt;4)-Mur2Ac(oyl-L-Ala-gamma-D-Glu-L-Lys-D-Ala-D-Ala)](n+1)-di-trans,octa-cis-undecaprenyl diphosphate + di-trans,octa-cis-undecaprenyl diphosphate + H(+). Its pathway is cell wall biogenesis; peptidoglycan biosynthesis. In terms of biological role, peptidoglycan polymerase that is essential for cell division. The protein is Probable peptidoglycan glycosyltransferase FtsW of Aeromonas salmonicida (strain A449).